The sequence spans 354 residues: Dihydroflavonol 4-reductase (354 aa).

NADP(+) is bound by residues Lys44 and Tyr163.

Belongs to the NAD(P)-dependent epimerase/dehydratase family. Dihydroflavonol-4-reductase subfamily.

It catalyses the reaction a (2R,3S,4S)-leucoanthocyanidin + NADP(+) = a (2R,3R)-dihydroflavonol + NADPH + H(+). The enzyme catalyses (2S)-flavan-4-ol + NADP(+) = (2S)-flavanone + NADPH + H(+). The protein operates within pigment biosynthesis; anthocyanin biosynthesis. Bifunctional enzyme involved in flavonoid metabolism. The sequence is that of Dihydroflavonol 4-reductase (ANT18) from Hordeum vulgare (Barley).